The primary structure comprises 534 residues: tRNA pseudouridine synthase 1 (534 aa).

The tract at residues 1–32 (MGRGGKRTWYNGDRREAKRNRPNSIYNGEGRP) is disordered. Asp103 acts as the Nucleophile in catalysis. 2 disordered regions span residues 246-271 (LANS…DSDS) and 507-534 (QEVS…DLEG). Residues Ser518, Ser519, and Ser525 each carry the phosphoserine modification.

This sequence belongs to the tRNA pseudouridine synthase TruA family. Zn(2+) is required as a cofactor.

The protein resides in the nucleus. The enzyme catalyses a uridine in tRNA = a pseudouridine in tRNA. It carries out the reaction uridine in snRNA = pseudouridine in snRNA. The catalysed reaction is a uridine in mRNA = a pseudouridine in mRNA. Formation of pseudouridine at positions 27 and 28 in the anticodon stem and loop of transfer RNAs; at positions 34 and 36 of intron-containing precursor tRNA(Ile) and at position 35 in the intron-containing tRNA(Tyr). Catalyzes pseudouridylation at position 44 in U2 snRNA. Also catalyzes pseudouridylation of mRNAs. The protein is tRNA pseudouridine synthase 1 (pus1) of Schizosaccharomyces pombe (strain 972 / ATCC 24843) (Fission yeast).